The sequence spans 165 residues: 3-isopropylmalate dehydratase small subunit (165 aa).

Belongs to the LeuD family. LeuD type 2 subfamily. As to quaternary structure, heterodimer of LeuC and LeuD.

It catalyses the reaction (2R,3S)-3-isopropylmalate = (2S)-2-isopropylmalate. The protein operates within amino-acid biosynthesis; L-leucine biosynthesis; L-leucine from 3-methyl-2-oxobutanoate: step 2/4. Catalyzes the isomerization between 2-isopropylmalate and 3-isopropylmalate, via the formation of 2-isopropylmaleate. This is 3-isopropylmalate dehydratase small subunit from Lachnoclostridium phytofermentans (strain ATCC 700394 / DSM 18823 / ISDg) (Clostridium phytofermentans).